The chain runs to 187 residues: HTH-type dhaKLM operon transcriptional activator DhaS (187 aa).

An HTH tetR-type domain is found at 12–72 (IITQKIIAKA…WIFENDFAEL (61 aa)). The segment at residues 35 to 54 (SVSDIMQTAKIRRQTFYNYF) is a DNA-binding region (H-T-H motif).

In terms of assembly, homodimer. Interacts with a homodimer of DhaQ.

Functionally, in complex with DhaQ, upon activation by dihydroxyacetone, activates transcription of the dhaKLM operon. Binds the inverted repeat sequence 5'-GGACACATN(6)ATTTGTCC-3' located upstream of and partially overlapping with the -35 promoter sequence of the dhaKLM operon promoter. This Lactococcus lactis subsp. lactis (strain IL1403) (Streptococcus lactis) protein is HTH-type dhaKLM operon transcriptional activator DhaS (dhaS).